The sequence spans 70 residues: Large ribosomal subunit protein uL29 (70 aa).

It belongs to the universal ribosomal protein uL29 family.

The chain is Large ribosomal subunit protein uL29 from Prochlorococcus marinus (strain MIT 9303).